The chain runs to 213 residues: Thymidylate kinase (213 aa).

Residue 9 to 16 (GLEGAGKS) participates in ATP binding.

This sequence belongs to the thymidylate kinase family.

It carries out the reaction dTMP + ATP = dTDP + ADP. In terms of biological role, phosphorylation of dTMP to form dTDP in both de novo and salvage pathways of dTTP synthesis. In Aeromonas hydrophila subsp. hydrophila (strain ATCC 7966 / DSM 30187 / BCRC 13018 / CCUG 14551 / JCM 1027 / KCTC 2358 / NCIMB 9240 / NCTC 8049), this protein is Thymidylate kinase.